The chain runs to 590 residues: tRNA-guanine(15) transglycosylase (590 aa).

Aspartate 90 serves as the catalytic Nucleophile. Aspartate 125 lines the substrate pocket. 3 residues coordinate Zn(2+): cysteine 278, cysteine 280, and cysteine 283. Residues 502-577 form the PUA domain; sequence KGRVVVKGLF…HPFIIIRRHV (76 aa).

This sequence belongs to the archaeosine tRNA-ribosyltransferase family. Zn(2+) serves as cofactor.

It catalyses the reaction guanosine(15) in tRNA + 7-cyano-7-deazaguanine = 7-cyano-7-carbaguanosine(15) in tRNA + guanine. Its pathway is tRNA modification; archaeosine-tRNA biosynthesis. In terms of biological role, exchanges the guanine residue with 7-cyano-7-deazaguanine (preQ0) at position 15 in the dihydrouridine loop (D-loop) of archaeal tRNAs. The chain is tRNA-guanine(15) transglycosylase from Korarchaeum cryptofilum (strain OPF8).